Reading from the N-terminus, the 106-residue chain is Small ribosomal subunit protein uS10 (106 aa).

It belongs to the universal ribosomal protein uS10 family. As to quaternary structure, part of the 30S ribosomal subunit.

Involved in the binding of tRNA to the ribosomes. This is Small ribosomal subunit protein uS10 from Mesomycoplasma hyopneumoniae (strain 232) (Mycoplasma hyopneumoniae).